Here is a 407-residue protein sequence, read N- to C-terminus: Phosphopentomutase (407 aa).

D10, D307, H312, D348, H349, and H360 together coordinate Mn(2+).

It belongs to the phosphopentomutase family. Mn(2+) serves as cofactor.

It localises to the cytoplasm. The enzyme catalyses 2-deoxy-alpha-D-ribose 1-phosphate = 2-deoxy-D-ribose 5-phosphate. It catalyses the reaction alpha-D-ribose 1-phosphate = D-ribose 5-phosphate. It functions in the pathway carbohydrate degradation; 2-deoxy-D-ribose 1-phosphate degradation; D-glyceraldehyde 3-phosphate and acetaldehyde from 2-deoxy-alpha-D-ribose 1-phosphate: step 1/2. Its function is as follows. Isomerase that catalyzes the conversion of deoxy-ribose 1-phosphate (dRib-1-P) and ribose 1-phosphate (Rib-1-P) to deoxy-ribose 5-phosphate (dRib-5-P) and ribose 5-phosphate (Rib-5-P), respectively. The protein is Phosphopentomutase of Methylobacterium nodulans (strain LMG 21967 / CNCM I-2342 / ORS 2060).